The following is a 435-amino-acid chain: Putative BTB/POZ domain-containing protein L275 (435 aa).

In terms of domain architecture, BTB spans 80-149; that stretch reads YDGYVYINVG…IKGKQNDNHN (70 aa).

The protein belongs to the mimivirus BTB/WD family.

The chain is Putative BTB/POZ domain-containing protein L275 from Acanthamoeba polyphaga mimivirus (APMV).